The following is a 112-amino-acid chain: ATP synthase epsilon chain (112 aa).

This sequence belongs to the ATPase epsilon chain family. F-type ATPases have 2 components, CF(1) - the catalytic core - and CF(0) - the membrane proton channel. CF(1) has five subunits: alpha(3), beta(3), gamma(1), delta(1), epsilon(1). CF(0) has three main subunits: a, b and c.

The protein resides in the cell membrane. Functionally, produces ATP from ADP in the presence of a proton gradient across the membrane. This chain is ATP synthase epsilon chain, found in Rickettsia africae (strain ESF-5).